The chain runs to 326 residues: Glycerol-3-phosphate dehydrogenase [NAD(P)+] (326 aa).

Positions 13, 33, and 107 each coordinate NADPH. Sn-glycerol 3-phosphate is bound by residues Lys-107, Gly-135, and Ser-137. Ala-139 serves as a coordination point for NADPH. 5 residues coordinate sn-glycerol 3-phosphate: Lys-190, Asp-243, Ser-253, Arg-254, and Asn-255. Catalysis depends on Lys-190, which acts as the Proton acceptor. Arg-254 is an NADPH binding site. The NADPH site is built by Leu-273 and Glu-275.

The protein belongs to the NAD-dependent glycerol-3-phosphate dehydrogenase family.

It is found in the cytoplasm. It catalyses the reaction sn-glycerol 3-phosphate + NAD(+) = dihydroxyacetone phosphate + NADH + H(+). The enzyme catalyses sn-glycerol 3-phosphate + NADP(+) = dihydroxyacetone phosphate + NADPH + H(+). The protein operates within membrane lipid metabolism; glycerophospholipid metabolism. Its function is as follows. Catalyzes the reduction of the glycolytic intermediate dihydroxyacetone phosphate (DHAP) to sn-glycerol 3-phosphate (G3P), the key precursor for phospholipid synthesis. The polypeptide is Glycerol-3-phosphate dehydrogenase [NAD(P)+] (Brucella abortus (strain 2308)).